We begin with the raw amino-acid sequence, 81 residues long: Photosystem I iron-sulfur center (81 aa).

4Fe-4S ferredoxin-type domains are found at residues 2-31 and 39-68; these read VHVVKIYDTCIGCTQCVRACPCDVLEMVPW and IASSPRTEDCIGCKRCETACPTDFLSIRVY. Cysteine 11, cysteine 14, cysteine 17, cysteine 21, cysteine 48, cysteine 51, cysteine 54, and cysteine 58 together coordinate [4Fe-4S] cluster.

In terms of assembly, the eukaryotic PSI reaction center is composed of at least 11 subunits. It depends on [4Fe-4S] cluster as a cofactor.

It is found in the plastid. The protein resides in the chloroplast thylakoid membrane. It carries out the reaction reduced [plastocyanin] + hnu + oxidized [2Fe-2S]-[ferredoxin] = oxidized [plastocyanin] + reduced [2Fe-2S]-[ferredoxin]. Its function is as follows. Apoprotein for the two 4Fe-4S centers FA and FB of photosystem I (PSI); essential for photochemical activity. FB is the terminal electron acceptor of PSI, donating electrons to ferredoxin. The C-terminus interacts with PsaA/B/D and helps assemble the protein into the PSI complex. Required for binding of PsaD and PsaE to PSI. PSI is a plastocyanin/cytochrome c6-ferredoxin oxidoreductase, converting photonic excitation into a charge separation, which transfers an electron from the donor P700 chlorophyll pair to the spectroscopically characterized acceptors A0, A1, FX, FA and FB in turn. This chain is Photosystem I iron-sulfur center, found in Cyanidium caldarium (Red alga).